The chain runs to 516 residues: Maturase K (516 aa).

Belongs to the intron maturase 2 family. MatK subfamily.

It is found in the plastid. The protein localises to the chloroplast. Usually encoded in the trnK tRNA gene intron. Probably assists in splicing its own and other chloroplast group II introns. The chain is Maturase K from Cypripedium calceolus (Yellow lady's slipper).